The chain runs to 288 residues: Bifunctional protein FolD 1 (288 aa).

NADP(+) is bound by residues 170 to 172 and Ile236; that span reads GPG.

This sequence belongs to the tetrahydrofolate dehydrogenase/cyclohydrolase family. As to quaternary structure, homodimer.

The catalysed reaction is (6R)-5,10-methylene-5,6,7,8-tetrahydrofolate + NADP(+) = (6R)-5,10-methenyltetrahydrofolate + NADPH. The enzyme catalyses (6R)-5,10-methenyltetrahydrofolate + H2O = (6R)-10-formyltetrahydrofolate + H(+). The protein operates within one-carbon metabolism; tetrahydrofolate interconversion. In terms of biological role, catalyzes the oxidation of 5,10-methylenetetrahydrofolate to 5,10-methenyltetrahydrofolate and then the hydrolysis of 5,10-methenyltetrahydrofolate to 10-formyltetrahydrofolate. In Deinococcus geothermalis (strain DSM 11300 / CIP 105573 / AG-3a), this protein is Bifunctional protein FolD 1.